Consider the following 763-residue polypeptide: Exo-1,4-beta-xylosidase bxlB (763 aa).

The first 23 residues, 1 to 23, serve as a signal peptide directing secretion; it reads MAVFKSWNLALLSSLFIPALCQS. A glycan (N-linked (GlcNAc...) asparagine) is linked at Asn-63. Asp-288 is an active-site residue. 6 N-linked (GlcNAc...) asparagine glycosylation sites follow: Asn-340, Asn-408, Asn-419, Asn-458, Asn-621, and Asn-760.

Belongs to the glycosyl hydrolase 3 family.

The protein resides in the secreted. The enzyme catalyses Hydrolysis of (1-&gt;4)-beta-D-xylans, to remove successive D-xylose residues from the non-reducing termini.. It functions in the pathway glycan degradation; xylan degradation. Its function is as follows. Xylan 1,4-beta-xylosidase involved in the hydrolysis of xylan, a major structural heterogeneous polysaccharide found in plant biomass representing the second most abundant polysaccharide in the biosphere, after cellulose. Active against rye arabinoxylan and xylohexaose, but not paranitrophenyl-beta-xyloside. The sequence is that of Exo-1,4-beta-xylosidase bxlB (bxlB) from Emericella nidulans (strain FGSC A4 / ATCC 38163 / CBS 112.46 / NRRL 194 / M139) (Aspergillus nidulans).